A 635-amino-acid polypeptide reads, in one-letter code: Threonine--tRNA ligase (635 aa).

The TGS domain maps to Met1–Thr61. A catalytic region spans residues Asp242 to Pro533. Zn(2+)-binding residues include Cys333, His384, and His510.

Belongs to the class-II aminoacyl-tRNA synthetase family. As to quaternary structure, homodimer. Requires Zn(2+) as cofactor.

It localises to the cytoplasm. It carries out the reaction tRNA(Thr) + L-threonine + ATP = L-threonyl-tRNA(Thr) + AMP + diphosphate + H(+). Catalyzes the attachment of threonine to tRNA(Thr) in a two-step reaction: L-threonine is first activated by ATP to form Thr-AMP and then transferred to the acceptor end of tRNA(Thr). Also edits incorrectly charged L-seryl-tRNA(Thr). In Rickettsia typhi (strain ATCC VR-144 / Wilmington), this protein is Threonine--tRNA ligase.